The chain runs to 484 residues: Sperm-associated antigen 8 (484 aa).

Residues 1 to 11 show a composition bias toward basic and acidic residues; sequence METSESTDRSQ. Disordered regions lie at residues 1 to 32, 123 to 221, and 324 to 348; these read METS…DPFS, DLSS…SAPV, and LQPQ…SHCQ. Composition is skewed to low complexity over residues 20-32 and 125-160; these read SSDG…DPFS and SSSR…SSSS. Residues 161–195 are compositionally biased toward gly residues; that stretch reads GPGGSPGGSGRGPGHGPGPGGGSGQGPGGGSGQGT. Positions 324–339 are enriched in polar residues; sequence LQPQSPTSSCTTQKDS. Mn stretches follow at residues 332 to 345 and 384 to 398; these read SCTT…PPKS and ESVT…LVQA. Residues 455 to 484 are disordered; the sequence is PLPFEPESYSQHGEISSLACQGGGQGGGGG. A compositionally biased stretch (gly residues) spans 475 to 484; it reads QGGGQGGGGG.

Belongs to the SPAG8 family. In terms of assembly, microtubule inner protein component of sperm flagellar doublet microtubules. Interacts with FHL5 (via second LIM domain). Interacts with RANBP9. In terms of tissue distribution, expressed in trachea multiciliated cells.

The protein localises to the cytoplasm. Its subcellular location is the nucleus. It localises to the cytoplasmic vesicle. It is found in the secretory vesicle. The protein resides in the acrosome. The protein localises to the cytoskeleton. Its subcellular location is the microtubule organizing center. It localises to the spindle. It is found in the cilium axoneme. The protein resides in the flagellum axoneme. Functionally, microtubule inner protein (MIP) part of the dynein-decorated doublet microtubules (DMTs) in cilia axoneme, which is required for motile cilia beating. Plays a role in spermatogenesis by enhancing the binding of CREM isoform tau to its coactivator FHL5 and increasing the FHL5-regulated transcriptional activation of CREM isoform tau. Involved in the acrosome reaction and in binding of sperm to the zona pellucida. Plays a role in regulation of the cell cycle by controlling progression through the G2/M phase, possibly by delaying the activation of CDK1 which is required for entry into mitosis. May play a role in fertility and microtubule formation through interaction with RANBP9. The polypeptide is Sperm-associated antigen 8 (SPAG8) (Bos taurus (Bovine)).